Consider the following 426-residue polypeptide: Putative two-component response regulator ARR20 (426 aa).

The Response regulatory domain maps to 40-155 (SNRVLLVGAD…VIAVLWRHVY (116 aa)). Position 91 is a 4-aspartylphosphate (Asp91). Positions 161–216 (KSGLDKPGESGTVESDPDEYDDLEQDNLYESNEEGSKNTCDHKEEKSPTKKPRMQW) are disordered. A compositionally biased stretch (acidic residues) spans 175–193 (SDPDEYDDLEQDNLYESNE). Residues 194–208 (EGSKNTCDHKEEKSP) show a composition bias toward basic and acidic residues. The Nuclear localization signal signature appears at 210–213 (KKPR). Residues 213 to 268 (RMQWTPELHHKFEVAVEKMGSLEKAFPKTILKYMQEELNVQGLTRNNVASHLQKYR) constitute a DNA-binding region (myb-like GARP).

Belongs to the ARR family. Type-B subfamily. As to quaternary structure, binds the target DNA as a monomer. In terms of processing, two-component system major event consists of a His-to-Asp phosphorelay between a sensor histidine kinase (HK) and a response regulator (RR). In plants, the His-to-Asp phosphorelay involves an additional intermediate named Histidine-containing phosphotransfer protein (HPt). This multistep phosphorelay consists of a His-Asp-His-Asp sequential transfer of a phosphate group between first a His and an Asp of the HK protein, followed by the transfer to a conserved His of the HPt protein and finally the transfer to an Asp in the receiver domain of the RR protein. In terms of tissue distribution, predominantly expressed in mature pistil tip. Also detected in the shoot apical meristem as well as vascular tissue and hydathodes of the leaves.

Its subcellular location is the nucleus. Putative transcriptional activator that binds specifically to the DNA sequence 5'-[AG]GATT-3'. Functions as a response regulator involved in His-to-Asp phosphorelay signal transduction system. Phosphorylation of the Asp residue in the receiver domain activates the ability of the protein to promote the transcription of target genes. Could directly activate some type-A response regulators in response to cytokinins. In Arabidopsis thaliana (Mouse-ear cress), this protein is Putative two-component response regulator ARR20 (ARR20).